Here is a 319-residue protein sequence, read N- to C-terminus: Lambda-crystallin (319 aa).

Ala-2 carries the post-translational modification N-acetylalanine. A Phosphoserine modification is found at Ser-3. NAD(+) is bound by residues 16–17 (LV), Asp-36, Glu-97, and Lys-102. Ser-111 is subject to Phosphoserine.

This sequence belongs to the 3-hydroxyacyl-CoA dehydrogenase family. Homodimer. Detected in eye lens, kidney, liver, heart, lung, brain and testis.

It is found in the cytoplasm. It catalyses the reaction L-gulonate + NAD(+) = 3-dehydro-L-gulonate + NADH + H(+). Its activity is regulated as follows. Inhibited by malonate and by inorganic phosphate. In terms of biological role, functions as a crystallin in the rabbit eye lens. Has high L-gulonate 3-dehydrogenase activity. It also exhibits low dehydrogenase activity toward L-3-hydroxybutyrate (HBA) and L-threonate. The polypeptide is Lambda-crystallin (CRYL1) (Oryctolagus cuniculus (Rabbit)).